A 401-amino-acid chain; its full sequence is CinA-like protein (401 aa).

Belongs to the CinA family.

The protein is CinA-like protein of Thermosipho melanesiensis (strain DSM 12029 / CIP 104789 / BI429).